We begin with the raw amino-acid sequence, 394 residues long: 8-amino-7-oxononanoate synthase (394 aa).

R21 provides a ligand contact to substrate. 112 to 113 (GY) provides a ligand contact to pyridoxal 5'-phosphate. Residue H137 participates in substrate binding. 3 residues coordinate pyridoxal 5'-phosphate: S183, H211, and T239. K242 carries the post-translational modification N6-(pyridoxal phosphate)lysine. T358 contacts substrate.

The protein belongs to the class-II pyridoxal-phosphate-dependent aminotransferase family. BioF subfamily. As to quaternary structure, homodimer. It depends on pyridoxal 5'-phosphate as a cofactor.

The enzyme catalyses 6-carboxyhexanoyl-[ACP] + L-alanine + H(+) = (8S)-8-amino-7-oxononanoate + holo-[ACP] + CO2. It participates in cofactor biosynthesis; biotin biosynthesis. Its function is as follows. Catalyzes the decarboxylative condensation of pimeloyl-[acyl-carrier protein] and L-alanine to produce 8-amino-7-oxononanoate (AON), [acyl-carrier protein], and carbon dioxide. This is 8-amino-7-oxononanoate synthase from Burkholderia cenocepacia (strain ATCC BAA-245 / DSM 16553 / LMG 16656 / NCTC 13227 / J2315 / CF5610) (Burkholderia cepacia (strain J2315)).